Reading from the N-terminus, the 92-residue chain is CRISPR-associated endoribonuclease Cas2 (92 aa).

Asp9 contributes to the Mg(2+) binding site.

Belongs to the CRISPR-associated endoribonuclease Cas2 protein family. As to quaternary structure, homodimer, forms a heterotetramer with a Cas1 homodimer. It depends on Mg(2+) as a cofactor.

Its function is as follows. CRISPR (clustered regularly interspaced short palindromic repeat), is an adaptive immune system that provides protection against mobile genetic elements (viruses, transposable elements and conjugative plasmids). CRISPR clusters contain sequences complementary to antecedent mobile elements and target invading nucleic acids. CRISPR clusters are transcribed and processed into CRISPR RNA (crRNA). Functions as a ssRNA-specific endoribonuclease. Involved in the integration of spacer DNA into the CRISPR cassette. This Aeropyrum pernix (strain ATCC 700893 / DSM 11879 / JCM 9820 / NBRC 100138 / K1) protein is CRISPR-associated endoribonuclease Cas2.